Reading from the N-terminus, the 137-residue chain is Golgin subfamily A member 7 (137 aa).

S-palmitoyl cysteine attachment occurs at residues Cys-69 and Cys-72.

Belongs to the ERF4 family. Interacts with ZDHHC9.

The protein localises to the golgi apparatus membrane. May be involved in protein transport from Golgi to cell surface. The ZDHHC9-GOLGA7 complex is a palmitoyltransferase specific for HRAS and NRAS. In Gallus gallus (Chicken), this protein is Golgin subfamily A member 7 (GOLGA7).